Consider the following 96-residue polypeptide: DNA-binding protein Saci_1468 (96 aa).

It belongs to the PDCD5 family.

In Sulfolobus acidocaldarius (strain ATCC 33909 / DSM 639 / JCM 8929 / NBRC 15157 / NCIMB 11770), this protein is DNA-binding protein Saci_1468.